The sequence spans 225 residues: Leucyl/phenylalanyl-tRNA--protein transferase (225 aa).

Belongs to the L/F-transferase family.

The protein localises to the cytoplasm. The catalysed reaction is N-terminal L-lysyl-[protein] + L-leucyl-tRNA(Leu) = N-terminal L-leucyl-L-lysyl-[protein] + tRNA(Leu) + H(+). It carries out the reaction N-terminal L-arginyl-[protein] + L-leucyl-tRNA(Leu) = N-terminal L-leucyl-L-arginyl-[protein] + tRNA(Leu) + H(+). It catalyses the reaction L-phenylalanyl-tRNA(Phe) + an N-terminal L-alpha-aminoacyl-[protein] = an N-terminal L-phenylalanyl-L-alpha-aminoacyl-[protein] + tRNA(Phe). In terms of biological role, functions in the N-end rule pathway of protein degradation where it conjugates Leu, Phe and, less efficiently, Met from aminoacyl-tRNAs to the N-termini of proteins containing an N-terminal arginine or lysine. This is Leucyl/phenylalanyl-tRNA--protein transferase from Gluconobacter oxydans (strain 621H) (Gluconobacter suboxydans).